Reading from the N-terminus, the 477-residue chain is FAD-dependent monooxygenase paxM (477 aa).

The chain crosses the membrane as a helical span at residues 4–24; sequence AEFQVIIVGGSIGGLTLAHCL. Residues glutamate 35, glycine 49, and arginine 108 each coordinate FAD. Arginine 195 is a catalytic residue. Residues aspartate 308 and alanine 321 each coordinate FAD. The helical transmembrane segment at 446-466 threads the bilayer; that stretch reads LMIYLFGLTIVYTSLTMMFDL.

This sequence belongs to the paxM FAD-dependent monooxygenase family. The cofactor is FAD.

It localises to the membrane. It functions in the pathway secondary metabolite biosynthesis. Its function is as follows. FAD-dependent monooxygenase; part of the gene cluster that mediates the biosynthesis of paxilline, a mycotoxin that acts as an inhibitor of mammalian maxi-K channels. PaxG, the geranylgeranyl diphosphate (GGPP) synthase is proposed to catalyze the first step in paxilline biosynthesis. Condensation of indole-3-glycerol phosphate with GGPP by paxC then forms 3-geranylgeranylindole (3-GGI), followed by epoxidation and cyclization of this intermediate (by paxM and paxB) to form paspaline. Paspaline is subsequently converted to 13-desoxypaxilline by paxP, the latter being then converted to paxilline by paxQ. Finally paxilline can be mono- and di-prenylated by paxD. The sequence is that of FAD-dependent monooxygenase paxM from Penicillium paxilli.